A 464-amino-acid chain; its full sequence is Soluble pyridine nucleotide transhydrogenase (464 aa).

Position 35–44 (35–44) interacts with FAD; the sequence is DDRRQVGGNC.

The protein belongs to the class-I pyridine nucleotide-disulfide oxidoreductase family. It depends on FAD as a cofactor.

Its subcellular location is the cytoplasm. It carries out the reaction NAD(+) + NADPH = NADH + NADP(+). Its function is as follows. Conversion of NADPH, generated by peripheral catabolic pathways, to NADH, which can enter the respiratory chain for energy generation. In Pseudomonas putida (strain ATCC 47054 / DSM 6125 / CFBP 8728 / NCIMB 11950 / KT2440), this protein is Soluble pyridine nucleotide transhydrogenase.